We begin with the raw amino-acid sequence, 303 residues long: Acetylglutamate kinase (303 aa).

Substrate contacts are provided by residues 73–74, Arg95, and Asn194; that span reads GG.

This sequence belongs to the acetylglutamate kinase family. ArgB subfamily.

The protein localises to the cytoplasm. The catalysed reaction is N-acetyl-L-glutamate + ATP = N-acetyl-L-glutamyl 5-phosphate + ADP. The protein operates within amino-acid biosynthesis; L-arginine biosynthesis; N(2)-acetyl-L-ornithine from L-glutamate: step 2/4. Its function is as follows. Catalyzes the ATP-dependent phosphorylation of N-acetyl-L-glutamate. This Saccharopolyspora erythraea (strain ATCC 11635 / DSM 40517 / JCM 4748 / NBRC 13426 / NCIMB 8594 / NRRL 2338) protein is Acetylglutamate kinase.